The following is a 442-amino-acid chain: Elongation factor 1-alpha 1 (442 aa).

A tr-type G domain is found at lysine 5 to lysine 227. Positions glycine 14–serine 21 are G1. Residue glycine 14–serine 21 participates in GTP binding. The interval glycine 70–aspartate 74 is G2. A G3 region spans residues aspartate 91 to glycine 94. GTP is bound by residues aspartate 91–histidine 95 and asparagine 153–aspartate 156. A G4 region spans residues asparagine 153–aspartate 156. A G5 region spans residues serine 194 to phenylalanine 196.

The protein belongs to the TRAFAC class translation factor GTPase superfamily. Classic translation factor GTPase family. EF-Tu/EF-1A subfamily.

It localises to the cytoplasm. In terms of biological role, this protein promotes the GTP-dependent binding of aminoacyl-tRNA to the A-site of ribosomes during protein biosynthesis. This is Elongation factor 1-alpha 1 (EFA1) from Euplotes crassus.